The following is a 111-amino-acid chain: uncharacterized protein (111 aa).

Residues 18-41 (FFYFFFISFYTLWIVFFLLHLSFF) form a helical membrane-spanning segment.

The protein localises to the membrane. This is an uncharacterized protein from Saccharomyces cerevisiae (strain ATCC 204508 / S288c) (Baker's yeast).